The following is a 155-amino-acid chain: V-type proton ATPase 16 kDa proteolipid subunit c (155 aa).

Topologically, residues 1-10 are lumenal; that stretch reads MSESKSGPEY. Residues 11–33 form a helical membrane-spanning segment; the sequence is ASFFAVMGASAAMVFSALGAAYG. Residues 34 to 55 are Cytoplasmic-facing; sequence TAKSGTGIAAMSVMRPEQIMKS. The chain crosses the membrane as a helical span at residues 56 to 76; sequence IIPVVMAGIIAIYGLVVAVLI. Over 77–92 the chain is Lumenal; the sequence is ANSLNDDISLYKSFLQ. The helical transmembrane segment at 93–114 threads the bilayer; sequence LGAGLSVGLSGLAAGFAIGIVG. Residues 115-131 lie on the Cytoplasmic side of the membrane; that stretch reads DAGVRGTAQQPRLFVGM. The helical transmembrane segment at 132-152 threads the bilayer; that stretch reads ILILIFAEVLGLYGLIVALIL. Residues 153-155 are Lumenal-facing; the sequence is STK.

It belongs to the V-ATPase proteolipid subunit family. V-ATPase is a heteromultimeric enzyme made up of two complexes: the ATP-hydrolytic V1 complex and the proton translocation V0 complex. The V1 complex consists of three catalytic AB heterodimers that form a heterohexamer, three peripheral stalks each consisting of EG heterodimers, one central rotor including subunits D and F, and the regulatory subunits C and H. The proton translocation complex V0 consists of the proton transport subunit a, a ring of proteolipid subunits c9c'', rotary subunit d, subunits e and f, and the accessory subunits ATP6AP1/Ac45 and ATP6AP2/PRR. Interacts with the V0 complex V-ATPase subunit a4 ATP6V0A4. Interacts with LASS2. Interacts with RNF182; this interaction leads to ubiquitination and degradation via the proteasome pathway. As to quaternary structure, (Microbial infection) Interacts with HTLV-1 accessory protein p12I. Post-translationally, ubiquitinated by RNF182, leading to its degradation via the ubiquitin-proteasome pathway.

It is found in the cytoplasmic vesicle. Its subcellular location is the clathrin-coated vesicle membrane. It localises to the secretory vesicle. The protein localises to the synaptic vesicle membrane. In terms of biological role, proton-conducting pore forming subunit of the V0 complex of vacuolar(H+)-ATPase (V-ATPase), a multisubunit enzyme composed of a peripheral complex (V1) that hydrolyzes ATP and a membrane integral complex (V0) that translocates protons. V-ATPase is responsible for acidifying and maintaining the pH of intracellular compartments, and in some cell types, it is targeted to the plasma membrane, where it is responsible for acidifying the extracellular environment. This is V-type proton ATPase 16 kDa proteolipid subunit c (ATP6V0C) from Homo sapiens (Human).